Here is a 102-residue protein sequence, read N- to C-terminus: Large ribosomal subunit protein uL23c (102 aa).

The protein belongs to the universal ribosomal protein uL23 family. As to quaternary structure, part of the 50S ribosomal subunit.

It localises to the plastid. It is found in the chloroplast. In terms of biological role, binds to 23S rRNA. The sequence is that of Large ribosomal subunit protein uL23c (rpl23) from Trieres chinensis (Marine centric diatom).